A 218-amino-acid chain; its full sequence is Small ribosomal subunit protein uS3c (218 aa).

Residues isoleucine 43–glutamate 118 enclose the KH type-2 domain.

Belongs to the universal ribosomal protein uS3 family. Part of the 30S ribosomal subunit.

The protein localises to the plastid. It is found in the chloroplast. This chain is Small ribosomal subunit protein uS3c (rps3), found in Populus trichocarpa (Western balsam poplar).